The primary structure comprises 343 residues: APQAPSVENPPEADCMLGIGKGYRGKKATTVAGVPCQEWAAQEPHRHGIFTPETNPRAGLEKNYCRNPDGDVNGPWCYTTNPRKLFDYCDIPQCESSFDCGKPKVEPKKCPARVVGGCVATPHSWPWQVSLRRRSREHFCGGTLISPEWVLTAAHCLDSILGPSFYTVILGAHYEMAREASVQEIPVSRLFLEPSRADIALLKLSSPAVITDEVIPACLPSPNYVVADKTVCYITGWGETQGTFGVGRLKEARLPVIENKVCNRYEYLNGRVKSTELCAGDLAGGTDSCQGDSGGPLVCFEKDKYILQGVTSWGLGCARPNKPGVYVRVSTYVPWIEETMRRY.

Kringle domains follow at residues 1–17 (APQA…DCML) and 41–120 (AQEP…GCVA). The plasmin heavy chain A stretch occupies residues 1 to 140 (APQAPSVENP…LRRRSREHFC (140 aa)). Cystine bridges form between cysteine 15–cysteine 94, cysteine 36–cysteine 77, and cysteine 65–cysteine 89. The 228-residue stretch at 114 to 341 (VVGGCVATPH…YVPWIEETMR (228 aa)) folds into the Peptidase S1 domain. At serine 130 the chain carries Phosphoserine. An intrachain disulfide couples cysteine 140 to cysteine 156. The tract at residues 141–343 (GGTLISPEWV…PWIEETMRRY (203 aa)) is plasmin light chain B. Catalysis depends on charge relay system residues histidine 155 and aspartate 198. Serine 221 carries the post-translational modification Phosphoserine. 3 disulfide bridges follow: cysteine 232/cysteine 299, cysteine 262/cysteine 278, and cysteine 289/cysteine 317. The active-site Charge relay system is serine 293.

This sequence belongs to the peptidase S1 family. Plasminogen subfamily. Interacts with CSPG4 and AMOT. Interacts (via the Kringle domains) with HRG; the interaction tethers PLG to the cell surface and enhances its activation. Interacts (via Kringle 4 domain) with ADA; the interaction stimulates PLG activation when in complex with DPP4. Angiostatin: Interacts with ATP5F1A; the interaction inhibits most of the angiogenic effects of angiostatin.

It is found in the secreted. The enzyme catalyses Preferential cleavage: Lys-|-Xaa &gt; Arg-|-Xaa, higher selectivity than trypsin. Converts fibrin into soluble products.. Converted into plasmin by plasminogen activators, both plasminogen and its activator being bound to fibrin. Cannot be activated with streptokinase. Functionally, plasmin dissolves the fibrin of blood clots and acts as a proteolytic factor in a variety of other processes including embryonic development, tissue remodeling, tumor invasion, and inflammation. In ovulation, weakens the walls of the Graafian follicle. It activates the urokinase-type plasminogen activator, collagenases and several complement zymogens, such as C1, C4 and C5. Cleavage of fibronectin and laminin leads to cell detachment and apoptosis. Also cleaves fibrin, thrombospondin and von Willebrand factor. Its role in tissue remodeling and tumor invasion may be modulated by CSPG4. Binds to cells. This is Plasminogen (PLG) from Ovis aries (Sheep).